We begin with the raw amino-acid sequence, 453 residues long: METVAVRDIFKNYKEFSNVKLVGWVRSNRDNGSIGFISFTDGSCIHSIQLVYKNGETNNFEEAKSTRTGSAILVEGVVVESKQPNQSFEIKVTNFILLKQADEDYPLQKKEHGAEFLRTIAHLRQRTNKYGTIMRLRSELAFAIHNFFHQNNFVWVSSPIITSNDAEGAGENFYVDSKTVKNFFGKNASLTVSGQMHAEAYAQSYKRVYTFGPTFRAEKSNTNRHVSEFWMVEPEIAFCNLEQLMYLIEEFVKYLIRFILKNCKDEMTFLNKLSNNTLSEKLLNAISHPFEKITYKKAIAILKSDVANKKVKFENESIYFGMDLNSEHEKYLCEKVFNKPLFIYDYPAEIKAFYMKMNADGTTVGACDLLMPGIGEIVGGSERESDYTKLVKKCTKANMKVEDIEWYLALRKYGYHKSAGFGLGFERFLMYVTECENVKDTIPFPRSYGSLDF.

Belongs to the class-II aminoacyl-tRNA synthetase family. In terms of assembly, homodimer.

The protein resides in the cytoplasm. The enzyme catalyses tRNA(Asn) + L-asparagine + ATP = L-asparaginyl-tRNA(Asn) + AMP + diphosphate + H(+). This chain is Asparagine--tRNA ligase, found in Malacoplasma penetrans (strain HF-2) (Mycoplasma penetrans).